The chain runs to 338 residues: UPF0104 membrane protein MTH_1261 (338 aa).

8 helical membrane passes run 6–26 (AILI…IGPG), 36–56 (DPVY…LFTL), 124–144 (LDTF…VLYF), 149–169 (WILA…FLAL), 231–251 (ISFL…TAFG), 254–274 (ISLL…MIPL), 275–295 (LPGG…YAGV), and 310–330 (ISFW…GSSV).

Belongs to the UPF0104 family.

The protein resides in the cell membrane. This chain is UPF0104 membrane protein MTH_1261, found in Methanothermobacter thermautotrophicus (strain ATCC 29096 / DSM 1053 / JCM 10044 / NBRC 100330 / Delta H) (Methanobacterium thermoautotrophicum).